A 170-amino-acid chain; its full sequence is Translationally-controlled tumor protein homolog (170 aa).

One can recognise a TCTP domain in the interval 1-170 (MIIYKCIISG…FKDGLLAEKC (170 aa)).

It belongs to the TCTP family.

The protein localises to the cytoplasm. Functionally, involved in calcium binding and microtubule stabilization. The chain is Translationally-controlled tumor protein homolog (tpt1) from Lateolabrax japonicus (Japanese sea perch).